Consider the following 194-residue polypeptide: Inosine triphosphate pyrophosphatase (194 aa).

ITP is bound at residue Thr-10 to Lys-15. Residue Glu-41 coordinates Mg(2+). Residues Lys-54, Asp-72–Thr-73, Lys-89, Phe-147–Asp-150, Lys-172, and Gln-177–Arg-178 contribute to the ITP site.

It belongs to the HAM1 NTPase family. As to quaternary structure, homodimer. Mg(2+) is required as a cofactor. The cofactor is Mn(2+).

The protein localises to the cytoplasm. It is found in the nucleus. The enzyme catalyses ITP + H2O = IMP + diphosphate + H(+). The catalysed reaction is dITP + H2O = dIMP + diphosphate + H(+). It carries out the reaction XTP + H2O = XMP + diphosphate + H(+). Pyrophosphatase that hydrolyzes non-canonical purine nucleotides such as inosine triphosphate (ITP), deoxyinosine triphosphate (dITP) or xanthosine 5'-triphosphate (XTP) to their respective monophosphate derivatives. The enzyme does not distinguish between the deoxy- and ribose forms. Probably excludes non-canonical purines from RNA and DNA precursor pools, thus preventing their incorporation into RNA and DNA and avoiding chromosomal lesions. The sequence is that of Inosine triphosphate pyrophosphatase from Kluyveromyces lactis (strain ATCC 8585 / CBS 2359 / DSM 70799 / NBRC 1267 / NRRL Y-1140 / WM37) (Yeast).